The sequence spans 473 residues: Ribulose bisphosphate carboxylase large chain (473 aa).

Substrate is bound by residues N116 and T166. Residue K168 is the Proton acceptor of the active site. K170 contributes to the substrate binding site. The Mg(2+) site is built by K194, D196, and E197. The residue at position 194 (K194) is an N6-carboxylysine. H287 serves as the catalytic Proton acceptor. The substrate site is built by R288, H320, and S372.

The protein belongs to the RuBisCO large chain family. Type I subfamily. As to quaternary structure, heterohexadecamer of 8 large chains and 8 small chains. Requires Mg(2+) as cofactor.

It carries out the reaction 2 (2R)-3-phosphoglycerate + 2 H(+) = D-ribulose 1,5-bisphosphate + CO2 + H2O. It catalyses the reaction D-ribulose 1,5-bisphosphate + O2 = 2-phosphoglycolate + (2R)-3-phosphoglycerate + 2 H(+). Its function is as follows. RuBisCO catalyzes two reactions: the carboxylation of D-ribulose 1,5-bisphosphate, the primary event in carbon dioxide fixation, as well as the oxidative fragmentation of the pentose substrate. Both reactions occur simultaneously and in competition at the same active site. The polypeptide is Ribulose bisphosphate carboxylase large chain (Nitrosomonas eutropha (strain DSM 101675 / C91 / Nm57)).